Here is a 237-residue protein sequence, read N- to C-terminus: UPF0280 protein Mpal_1292 (237 aa).

The protein belongs to the UPF0280 family.

The chain is UPF0280 protein Mpal_1292 from Methanosphaerula palustris (strain ATCC BAA-1556 / DSM 19958 / E1-9c).